Here is a 143-residue protein sequence, read N- to C-terminus: Large ribosomal subunit protein uL15 (143 aa).

This sequence belongs to the universal ribosomal protein uL15 family. In terms of assembly, part of the 50S ribosomal subunit.

Functionally, binds to the 23S rRNA. The polypeptide is Large ribosomal subunit protein uL15 (Methanococcus aeolicus (strain ATCC BAA-1280 / DSM 17508 / OCM 812 / Nankai-3)).